The following is a 301-amino-acid chain: XIAP-associated factor 1 (301 aa).

A TRAF-type zinc finger spans residues 22–99 (LHEAYCLRFL…KLDMQLSKLE (78 aa)). A disordered region spans residues 189–257 (ILPSSLPSQA…KPRTSSPRGD (69 aa)). The segment covering 193–205 (SLPSQAAENQTST) has biased composition (polar residues).

In terms of assembly, interacts with BIRC4; the interaction is not detected in. Interacts with BIRC1, BIRC2, BIRC3, BIRC7 and BIRC8. Part of an complex consisting of BIRC4, XAF1 and BIRC5; the complex formation requires IFN-beta stimulation. Interacts with RNF114, the interaction increases XAF1 stability and proapoptotic effects, and may regulate IFN signaling. As to expression, widely expressed. Expression is frequently down-regulated in cancer cell lines. Isoform 5 is widely expressed. Expressed in placenta (at protein level).

It localises to the cytoplasm. It is found in the nucleus. The protein resides in the mitochondrion. In terms of biological role, seems to function as a negative regulator of members of the IAP (inhibitor of apoptosis protein) family. Inhibits anti-caspase activity of BIRC4. Induces cleavage and inactivation of BIRC4 independent of caspase activation. Mediates TNF-alpha-induced apoptosis and is involved in apoptosis in trophoblast cells. May inhibit BIRC4 indirectly by activating the mitochondrial apoptosis pathway. After translocation to mitochondria, promotes translocation of BAX to mitochondria and cytochrome c release from mitochondria. Seems to promote the redistribution of BIRC4 from the cytoplasm to the nucleus, probably independent of BIRC4 inactivation which seems to occur in the cytoplasm. The BIRC4-XAF1 complex mediates down-regulation of BIRC5/survivin; the process requires the E3 ligase activity of BIRC4. Seems to be involved in cellular sensitivity to the proapoptotic actions of TRAIL. May be a tumor suppressor by mediating apoptosis resistance of cancer cells. This is XIAP-associated factor 1 (XAF1) from Homo sapiens (Human).